The chain runs to 620 residues: Membrane protein insertase YidC (620 aa).

A helical membrane pass occupies residues 7 to 27 (NYLIAIALSVMVVLGWQFFYM). The span at 37–58 (AEQAQQAQQAKTPATQATPGAA) shows a compositional bias: low complexity. Residues 37–77 (AEQAQQAQQAKTPATQATPGAAVNGALPGQTQASATTSRED) are disordered. Helical transmembrane passes span 399–419 (FGVAILLTTIAVKLLFFPLAS), 469–489 (WPLLLQIPVFFALYKVIYITI), 514–534 (LFGLLPFESPAMLHLGIWPII), and 560–580 (WMPLVFTFMLGSFPAGLVIYW).

Belongs to the OXA1/ALB3/YidC family. Type 1 subfamily. In terms of assembly, interacts with the Sec translocase complex via SecD. Specifically interacts with transmembrane segments of nascent integral membrane proteins during membrane integration.

It is found in the cell inner membrane. Required for the insertion and/or proper folding and/or complex formation of integral membrane proteins into the membrane. Involved in integration of membrane proteins that insert both dependently and independently of the Sec translocase complex, as well as at least some lipoproteins. Aids folding of multispanning membrane proteins. The polypeptide is Membrane protein insertase YidC (Allorhizobium ampelinum (strain ATCC BAA-846 / DSM 112012 / S4) (Agrobacterium vitis (strain S4))).